We begin with the raw amino-acid sequence, 277 residues long: Urease accessory protein UreD (277 aa).

The protein belongs to the UreD family. In terms of assembly, ureD, UreF and UreG form a complex that acts as a GTP-hydrolysis-dependent molecular chaperone, activating the urease apoprotein by helping to assemble the nickel containing metallocenter of UreC. The UreE protein probably delivers the nickel.

Its subcellular location is the cytoplasm. Its function is as follows. Required for maturation of urease via the functional incorporation of the urease nickel metallocenter. In Pseudomonas entomophila (strain L48), this protein is Urease accessory protein UreD.